Consider the following 316-residue polypeptide: B3 domain-containing protein Os04g0581400 (316 aa).

Residues 1 to 100 are disordered; that stretch reads MEFATTSSRF…GSGGGGGGED (100 aa). The segment covering 13 to 36 has biased composition (acidic residues); it reads EEEEEEEGEQEMEQEQDEEEEEAE. Positions 46 to 77 are enriched in low complexity; that stretch reads TSAAAAATASSSSPTSVSPSATASAAASTSAS. Gly residues predominate over residues 88 to 98; the sequence is GASGSGGGGGG. A DNA-binding region (TF-B3) is located at residues 110–215; sequence FDKVVTPSDV…RLFIDWKRRA (106 aa). The disordered stretch occupies residues 239–290; the sequence is GGAGASSCRPRRPPRSTSITAFARASTSATSTPLCRRGSSSSSAPQGRGFIS. Residues 253–270 are compositionally biased toward low complexity; that stretch reads RSTSITAFARASTSATST.

Its subcellular location is the nucleus. This Oryza sativa subsp. japonica (Rice) protein is B3 domain-containing protein Os04g0581400.